The following is a 476-amino-acid chain: Bifunctional protein HldE (476 aa).

A ribokinase region spans residues 1–318; the sequence is MFQYSAEFKQ…ENAIHGRSNT (318 aa). 195-198 provides a ligand contact to ATP; sequence NMSE. Residue aspartate 264 is part of the active site. The tract at residues 344 to 476 is cytidylyltransferase; it reads MTNGCFDILH…VISKIQQLKD (133 aa).

This sequence in the N-terminal section; belongs to the carbohydrate kinase PfkB family. In the C-terminal section; belongs to the cytidylyltransferase family. Homodimer.

It carries out the reaction D-glycero-beta-D-manno-heptose 7-phosphate + ATP = D-glycero-beta-D-manno-heptose 1,7-bisphosphate + ADP + H(+). It catalyses the reaction D-glycero-beta-D-manno-heptose 1-phosphate + ATP + H(+) = ADP-D-glycero-beta-D-manno-heptose + diphosphate. It participates in nucleotide-sugar biosynthesis; ADP-L-glycero-beta-D-manno-heptose biosynthesis; ADP-L-glycero-beta-D-manno-heptose from D-glycero-beta-D-manno-heptose 7-phosphate: step 1/4. Its pathway is nucleotide-sugar biosynthesis; ADP-L-glycero-beta-D-manno-heptose biosynthesis; ADP-L-glycero-beta-D-manno-heptose from D-glycero-beta-D-manno-heptose 7-phosphate: step 3/4. The protein operates within bacterial outer membrane biogenesis; LPS core biosynthesis. Functionally, catalyzes the phosphorylation of D-glycero-D-manno-heptose 7-phosphate at the C-1 position to selectively form D-glycero-beta-D-manno-heptose-1,7-bisphosphate. Its function is as follows. Catalyzes the ADP transfer from ATP to D-glycero-beta-D-manno-heptose 1-phosphate, yielding ADP-D-glycero-beta-D-manno-heptose. This is Bifunctional protein HldE from Pasteurella multocida (strain Pm70).